The chain runs to 492 residues: Heat shock factor protein 4 (492 aa).

The DNA-binding element occupies 17–122; sequence VPAFLGKLWA…LLERVRRKVP (106 aa). The segment at 129 to 203 is hydrophobic repeat HR-A/B; sequence SRWRPEDLSR…GPLQTGPSST (75 aa). The segment at 245-322 is interactions with DUSP26, MAPK1 and MAPK2; it reads LPETTLGLSP…ECDFCVTAPP (78 aa). The segment at 263–282 is disordered; the sequence is SDIPEDSPSPEGHRLSPSGG. Lysine 293 participates in a covalent cross-link: Glycyl lysine isopeptide (Lys-Gly) (interchain with G-Cter in SUMO). Serine 298 carries the post-translational modification Phosphoserine. Residues 337-378 form a disordered region; sequence GSYSPEGPRSVQQPEPRGPREVPDRGTLGLDRGNRSPESLLP. The tract at residues 364-389 is hydrophobic repeat HR-C; the sequence is LGLDRGNRSPESLLPPMLLRPAPETL.

Belongs to the HSF family. Homotrimer. Exhibits constitutive DNA binding and forms trimers even in the absence of stress. Interacts with ALKBH4, DUSP26, MAPK1, MAPK2, MAPK8 and MAP kinase p38. Phosphorylated mainly on serine residues. Phosphorylation on Ser-298 promotes sumoylation on Lys-293. Post-translationally, isoform HSF4B is constitutively sumoylated. Sumoylation represses the transcriptional activity and is promoted by phosphorylation on Ser-298. HSFA is not sumoylated. As to expression, preferentially expressed in brain and lung. Also found in the eye. Slightly detected in liver and skeletal muscle. Isoform B is the major species in various tissues.

The protein resides in the nucleus. In terms of biological role, heat-shock transcription factor that specifically binds heat shock promoter elements (HSE). Required for denucleation and organelle rupture and degradation that occur during eye lens terminal differentiation, when fiber cells that compose the lens degrade all membrane-bound organelles in order to provide lens with transparency to allow the passage of light. In this process, may regulate denucleation of lens fiber cells in part by activating DNASE2B transcription. May be involved in DNA repair through the transcriptional regulation of RAD51. May up-regulate p53/TP53 protein in eye lens fiber cells, possibly through protein stabilization. In the eye lens, controls the expression of alpha-crystallin B chain/CRYAB and consequently may be involved in the regulation of lysosomal acidification. Its function is as follows. Transcriptional repressor. Functionally, transcriptional activator. The polypeptide is Heat shock factor protein 4 (Hsf4) (Mus musculus (Mouse)).